The primary structure comprises 121 residues: Large ribosomal subunit protein uL18 (121 aa).

This sequence belongs to the universal ribosomal protein uL18 family. As to quaternary structure, part of the 50S ribosomal subunit; part of the 5S rRNA/L5/L18/L25 subcomplex. Contacts the 5S and 23S rRNAs.

In terms of biological role, this is one of the proteins that bind and probably mediate the attachment of the 5S RNA into the large ribosomal subunit, where it forms part of the central protuberance. This Paraburkholderia phytofirmans (strain DSM 17436 / LMG 22146 / PsJN) (Burkholderia phytofirmans) protein is Large ribosomal subunit protein uL18.